A 324-amino-acid chain; its full sequence is Methyltransferase pytC (324 aa).

It belongs to the methyltransferase superfamily. LaeA methyltransferase family.

It functions in the pathway secondary metabolite biosynthesis. In terms of biological role, methyltransferase; part of the gene cluster that mediates the biosynthesis of pyranterreones, a family of antioxidative compounds. The first step of pyranonigrins biosynthesis is performed by the hybrid PKS-NRPS synthetase pytA that condenses 4 malonyl-CoA units ato the acetyl starter unit by the modular PKS of pytA. The acyl chain is then connected to an L-serine through the amide bond by the modular NRPS of pytA. A tetramic acid is formed and released from the PKS-NRPS pytA to give pyranterreone 5 with the help of the thioesterase pytI. Pyranterreone 5 could be methylated by pytC to afford pyranterreone 6. Both pyranterreones 5 and 6 are subsequently oxidized by the FAD-linked oxidoreductase pytB and the cytochrome P450 monooxygenase pytD to form the fused gamma-pyrone core, resulting in pyranterreones 7 and 11, respectively. The hydroxy group at C-8 of pyranterreones 7 and 11 are dehydrated by the aspartyl protease pytH to form a delta-7 double bond to give pyranterreones 3 and 1, 2 accordingly. The exo-methylene of pyranterreone 3 could be reduced into a pendant methyl by reductase pytE to provide pyranterreone 4, also known as cordylactam. Pyranterreone 4 can be reconverted to pyranterreone 3 through pytB-catalyzed dehydrogenation or further oxidized to pyranterreones 9 and 10. This is Methyltransferase pytC from Aspergillus terreus (strain NIH 2624 / FGSC A1156).